Here is a 350-residue protein sequence, read N- to C-terminus: Biotin synthase (350 aa).

The 225-residue stretch at 54–278 folds into the Radical SAM core domain; that stretch reads REIQLSTLLS…TMPQSYVRLS (225 aa). [4Fe-4S] cluster is bound by residues Cys69, Cys73, and Cys76. The [2Fe-2S] cluster site is built by Cys113, Cys144, Cys204, and Arg276.

This sequence belongs to the radical SAM superfamily. Biotin synthase family. In terms of assembly, homodimer. Requires [4Fe-4S] cluster as cofactor. The cofactor is [2Fe-2S] cluster.

It catalyses the reaction (4R,5S)-dethiobiotin + (sulfur carrier)-SH + 2 reduced [2Fe-2S]-[ferredoxin] + 2 S-adenosyl-L-methionine = (sulfur carrier)-H + biotin + 2 5'-deoxyadenosine + 2 L-methionine + 2 oxidized [2Fe-2S]-[ferredoxin]. The protein operates within cofactor biosynthesis; biotin biosynthesis; biotin from 7,8-diaminononanoate: step 2/2. In terms of biological role, catalyzes the conversion of dethiobiotin (DTB) to biotin by the insertion of a sulfur atom into dethiobiotin via a radical-based mechanism. This Neisseria meningitidis serogroup C (strain 053442) protein is Biotin synthase.